The chain runs to 699 residues: TBC1 domain family member 23 (699 aa).

In terms of domain architecture, Rab-GAP TBC spans 44–225; that stretch reads PLPADLRAKV…AIWDGYLQQA (182 aa). S300 carries the post-translational modification Phosphoserine. The Rhodanese domain occupies 334–446; that stretch reads EGVRFFVVDC…LQQHLADINV (113 aa). Over residues 459–479 the composition is skewed to polar residues; that stretch reads STSGSRSSINSVDGESPNGSS. The interval 459–483 is disordered; that stretch reads STSGSRSSINSVDGESPNGSSDRGM. Phosphoserine is present on residues S469, S474, and S507. The residue at position 514 (T514) is a Phosphothreonine. A may mediate the interaction with C17orf75, FAM91A1 and WDR11 region spans residues 514 to 573; sequence TPVDRMSFNLPWPDRSCTERHVSSSDRVGKPYRGVKPVFSIGDEEEYDTDEIDSSSMSDD. The segment at 514–699 is may mediate the interaction with WASHC1; sequence TPVDRMSFNL…IMKVLDALES (186 aa). Phosphoserine occurs at positions 520 and 571. Residues 574–699 form a may mediate the interaction with FKBP15 and WASHC2; required for endosome to Golgi trafficking region; the sequence is DRKEVVNIQT…IMKVLDALES (126 aa).

As to quaternary structure, directly interacts with GOLGA1 and GOLGA4. Interacts with FAM91A1, C17ORF75 and WDR11; the interaction recruits TBC1D23 to AP-1-derived vesicles. Directly interacts with WASHC1 and WASHC2A/FAM21A. Interacts with FKBP15. As to expression, isoform 1: Widely expressed, including in fetal adult brain (corpus callosum, pons, cerebellum), spinal cord, heart, skeletal muscle, thymus and bone marrow, and at lower levels in spleen. Hardly detected in liver, kidney, colon and testis. Isoform 2: Expressed at high levels in liver, kidney, colon and testis. Hardly detected in tissues expressing high levels of isoform 1. Expressed at low levels in spleen.

It is found in the golgi apparatus. The protein resides in the trans-Golgi network. Its subcellular location is the cytoplasmic vesicle. Functionally, putative Rab GTPase-activating protein which plays a role in vesicular trafficking. Involved in endosome-to-Golgi trafficking. Acts as a bridging protein by binding simultaneously to golgins, including GOLGA1 and GOLGA4, located at the trans-Golgi, and to the WASH complex, located on endosome-derived vesicles. Together with WDR11 complex facilitates the golgin-mediated capture of vesicles generated using AP-1. Plays a role in brain development, including in cortical neuron positioning. May also be important for neurite outgrowth, possibly through its involvement in membrane trafficking and cargo delivery, 2 processes that are essential for axonal and dendritic growth. May act as a general inhibitor of innate immunity signaling, strongly inhibiting multiple TLR and dectin/CLEC7A-signaling pathways. Does not alter initial activation events, but instead affects maintenance of inflammatory gene expression several hours after bacterial lipopolysaccharide (LPS) challenge. The chain is TBC1 domain family member 23 (TBC1D23) from Homo sapiens (Human).